We begin with the raw amino-acid sequence, 324 residues long: Porphobilinogen deaminase (324 aa).

Cys-246 carries the S-(dipyrrolylmethanemethyl)cysteine modification. An insert region spans residues 261 to 279 (GQAPEEGGRAAASQAPAAL).

The protein belongs to the HMBS family. As to quaternary structure, monomer. Dipyrromethane serves as cofactor.

It carries out the reaction 4 porphobilinogen + H2O = hydroxymethylbilane + 4 NH4(+). The protein operates within porphyrin-containing compound metabolism; protoporphyrin-IX biosynthesis; coproporphyrinogen-III from 5-aminolevulinate: step 2/4. In terms of biological role, tetrapolymerization of the monopyrrole PBG into the hydroxymethylbilane pre-uroporphyrinogen in several discrete steps. The polypeptide is Porphobilinogen deaminase (hemC) (Paenibacillus macerans (Bacillus macerans)).